We begin with the raw amino-acid sequence, 773 residues long: Acyl-homoserine lactone acylase PvdQ (773 aa).

The signal sequence occupies residues 1-23 (MSRALPGFLFAGLSVAVVLPAQA). Positions 200-221 (SQQVQALQLAAARNERFALERG) are cleaved as a propeptide — spacer peptide. The Nucleophile role is filled by S222.

Belongs to the peptidase S45 family. In terms of assembly, heterodimer of an alpha subunit and a beta subunit processed from the same precursor.

It is found in the periplasm. It catalyses the reaction an N-acyl-L-homoserine lactone + H2O = L-homoserine lactone + a carboxylate. Functionally, catalyzes the deacylation of acyl-homoserine lactone (AHL or acyl-HSL), releasing homoserine lactone (HSL) and the corresponding fatty acid. Possesses a specificity for the degradation of long-chain acyl-HSLs (side chains of 11 to 14 carbons in length). This Pseudomonas syringae pv. tomato (strain ATCC BAA-871 / DC3000) protein is Acyl-homoserine lactone acylase PvdQ (pvdQ).